Reading from the N-terminus, the 1274-residue chain is Meiosis inhibitor protein 1 (1274 aa).

As to expression, expressed predominantly in testis. Weakly expressed in spleen and thymus. Expressed in the ovaries, Fallopian tubes and uterus.

Functionally, required for normal meiotic chromosome synapsis. May be involved in the formation of meiotic double-strand breaks (DSBs) in spermatocytes. The protein is Meiosis inhibitor protein 1 of Homo sapiens (Human).